The chain runs to 250 residues: Indole-3-glycerol phosphate synthase (250 aa).

It belongs to the TrpC family.

It catalyses the reaction 1-(2-carboxyphenylamino)-1-deoxy-D-ribulose 5-phosphate + H(+) = (1S,2R)-1-C-(indol-3-yl)glycerol 3-phosphate + CO2 + H2O. The protein operates within amino-acid biosynthesis; L-tryptophan biosynthesis; L-tryptophan from chorismate: step 4/5. This is Indole-3-glycerol phosphate synthase from Picrophilus torridus (strain ATCC 700027 / DSM 9790 / JCM 10055 / NBRC 100828 / KAW 2/3).